Reading from the N-terminus, the 246-residue chain is 14-3-3 protein eta (246 aa).

Position 2 is an N-acetylglycine (Gly2). Ser25 and Ser59 each carry phosphoserine.

Belongs to the 14-3-3 family. In terms of assembly, homodimer. Interacts with many nuclear hormone receptors and cofactors including AR, ESR1, ESR2, MC2R, NR3C1, NRIP1, PPARBP and THRA. Interacts with ABL1 (phosphorylated form); the interaction retains it in the cytoplasm. Weakly interacts with CDKN1B. Interacts with ARHGEF28 and CDK16. Interacts with GAB2. Interacts with KCNK18 in a phosphorylation-dependent manner. Interacts with SAMSN1. Interacts with the 'Ser-241' phosphorylated form of PDPK1. Interacts with the 'Thr-369' phosphorylated form of DAPK2. Interacts with PI4KB, TBC1D22A and TBC1D22B. Interacts with SLITRK1. Interacts with MEFV. In terms of processing, phosphorylated on Ser-59 by protein kinase C delta type catalytic subunit in a sphingosine-dependent fashion.

It is found in the cytoplasm. Adapter protein implicated in the regulation of a large spectrum of both general and specialized signaling pathways. Binds to a large number of partners, usually by recognition of a phosphoserine or phosphothreonine motif. Binding generally results in the modulation of the activity of the binding partner. Negatively regulates the kinase activity of PDPK1. This is 14-3-3 protein eta (YWHAH) from Bos taurus (Bovine).